The following is a 1770-amino-acid chain: Transposon Ty2-OR1 Gag-Pol polyprotein (1770 aa).

Composition is skewed to polar residues over residues 1 to 39 (MESQ…SASN) and 49 to 60 (KVNSQQETTPGT). Disordered stretches follow at residues 1-88 (MESQ…YQQH) and 359-449 (QHSE…SNDE). The RNA-binding stretch occupies residues 295–397 (ENNINVSDRL…SSKPRAAKAH (103 aa)). A compositionally biased stretch (low complexity) spans 369-381 (TSPNTTNTKVTTR). Polar residues-rich tracts occupy residues 399 to 408 (IATSSKFSRV) and 415 to 435 (ESTV…GQQQ). Residue Asp457 is the For protease activity; shared with dimeric partner of the active site. An integrase-type zinc finger-like region spans residues 579 to 636 (NVNKSKSVNKYPYPLIHRMLGHANFRSIQKSLKKNAVTYLKESDIEWSNASTYQCPDC). Positions 656 to 831 (ESYEPFQYLH…AGLDITTILP (176 aa)) constitute an Integrase catalytic domain. Residues Asp667 and Asp732 each contribute to the Mg(2+) site. Composition is skewed to polar residues over residues 916–929 (FIEQ…YDQN), 1009–1024 (ESDT…FTAR), and 1065–1082 (QRNS…STPS). 3 disordered regions span residues 916–935 (FIEQ…SDHD), 1005–1038 (GGTI…MIDL), and 1057–1205 (GGTE…TEIE). A Bipartite nuclear localization signal motif is present at residues 1193–1227 (KKRSLEDNETEIEVSRDTWNNKNMRSLEPPRSKKR). Positions 1353–1491 (NDYYITQLDI…DILGLEIKYQ (139 aa)) constitute a Reverse transcriptase Ty1/copia-type domain. Residues Asp1361, Asp1442, Asp1443, Asp1625, Glu1667, and Asp1700 each coordinate Mg(2+). One can recognise an RNase H Ty1/copia-type domain in the interval 1625 to 1767 (DASYGNQPYY…IKTFKLLTNK (143 aa)).

As to quaternary structure, the capsid protein forms a homotrimer, from which the VLPs are assembled. The protease is a homodimer, whose active site consists of two apposed aspartic acid residues. Initially, virus-like particles (VLPs) are composed of the structural unprocessed proteins Gag and Gag-Pol, and also contain the host initiator methionine tRNA (tRNA(i)-Met) which serves as a primer for minus-strand DNA synthesis, and a dimer of genomic Ty RNA. Processing of the polyproteins occurs within the particle and proceeds by an ordered pathway, called maturation. First, the protease (PR) is released by autocatalytic cleavage of the Gag-Pol polyprotein, and this cleavage is a prerequisite for subsequent processing at the remaining sites to release the mature structural and catalytic proteins. Maturation takes place prior to the RT reaction and is required to produce transposition-competent VLPs.

The protein localises to the cytoplasm. It localises to the nucleus. The enzyme catalyses DNA(n) + a 2'-deoxyribonucleoside 5'-triphosphate = DNA(n+1) + diphosphate. The catalysed reaction is Endonucleolytic cleavage to 5'-phosphomonoester.. Functionally, capsid protein (CA) is the structural component of the virus-like particle (VLP), forming the shell that encapsulates the retrotransposons dimeric RNA genome. The particles are assembled from trimer-clustered units and there are holes in the capsid shells that allow for the diffusion of macromolecules. CA also has nucleocapsid-like chaperone activity, promoting primer tRNA(i)-Met annealing to the multipartite primer-binding site (PBS), dimerization of Ty2 RNA and initiation of reverse transcription. The aspartyl protease (PR) mediates the proteolytic cleavages of the Gag and Gag-Pol polyproteins after assembly of the VLP. In terms of biological role, reverse transcriptase/ribonuclease H (RT) is a multifunctional enzyme that catalyzes the conversion of the retro-elements RNA genome into dsDNA within the VLP. The enzyme displays a DNA polymerase activity that can copy either DNA or RNA templates, and a ribonuclease H (RNase H) activity that cleaves the RNA strand of RNA-DNA heteroduplexes during plus-strand synthesis and hydrolyzes RNA primers. The conversion leads to a linear dsDNA copy of the retrotransposon that includes long terminal repeats (LTRs) at both ends. Its function is as follows. Integrase (IN) targets the VLP to the nucleus, where a subparticle preintegration complex (PIC) containing at least integrase and the newly synthesized dsDNA copy of the retrotransposon must transit the nuclear membrane. Once in the nucleus, integrase performs the integration of the dsDNA into the host genome. This is Transposon Ty2-OR1 Gag-Pol polyprotein (TY2B-OR1) from Saccharomyces cerevisiae (strain ATCC 204508 / S288c) (Baker's yeast).